Reading from the N-terminus, the 998-residue chain is Probable protein kinase DDB_G0277539 (998 aa).

Disordered stretches follow at residues 1–34, 65–207, 265–284, 316–367, 380–420, and 435–489; these read MDFP…DFDQ, CEDQ…TNEF, INNN…FSSS, SNGS…NYSS, ERTN…PNSI, and RLQS…NNNN. A compositionally biased stretch (acidic residues) spans 23-32; sequence YDDDDDDDDF. Residues 70-139 are compositionally biased toward low complexity; the sequence is QQQQQQSSSP…NNNNNNNNNN (70 aa). The segment covering 140–150 has biased composition (basic residues); the sequence is SHHHHLRKGRR. Polar residues predominate over residues 166–177; it reads ASLSSTKTNMFP. 2 stretches are compositionally biased toward low complexity: residues 184–203 and 265–274; these read SSPS…QSQQ and INNNYNNNNN. Residues 316–328 show a composition bias toward polar residues; that stretch reads SNGSYNKGNTFPS. Positions 330–340 are enriched in basic and acidic residues; sequence EVKRVRPDQRA. Low complexity-rich tracts occupy residues 393–415 and 450–489; these read NVNN…NNNN and NNNN…NNNN. Residues 508-849 form the Protein kinase domain; that stretch reads FQELDLIGEG…AEQLLEHPLI (342 aa). Residues 514–522 and Lys-537 each bind ATP; that span reads IGEGSFGHV. Asp-631 acts as the Proton acceptor in catalysis. Mg(2+) contacts are provided by Asn-636 and Glu-677.

Belongs to the protein kinase superfamily. Ser/Thr protein kinase family. WEE1 subfamily.

It carries out the reaction L-seryl-[protein] + ATP = O-phospho-L-seryl-[protein] + ADP + H(+). The catalysed reaction is L-threonyl-[protein] + ATP = O-phospho-L-threonyl-[protein] + ADP + H(+). This is Probable protein kinase DDB_G0277539 from Dictyostelium discoideum (Social amoeba).